A 310-amino-acid chain; its full sequence is Transcription initiation factor TFIID subunit 8 (310 aa).

Residues 1–30 are disordered; that stretch reads MADAAATAGAGGSGTRSGSKQSTNPADNYH. Position 2 is an N-acetylalanine (Ala2). The 68-residue stretch at 35–102 folds into the Histone-fold; involved in forming hexamer structure in TFIID complex domain; that stretch reads RTLQVVVSSL…IVVTLVEMGF (68 aa). Position 130 is a phosphothreonine (Thr130). The tract at residues 262–310 is disordered; sequence DSGAEKENTSVLQQNPSLSGSRNGEENIIDNPYLRPVKKPKIRRKKSLS. Polar residues predominate over residues 270–283; it reads TSVLQQNPSLSGSR. Position 271 is a phosphoserine (Ser271). Positions 294–307 match the Nuclear localization signal motif; the sequence is YLRPVKKPKIRRKK. A compositionally biased stretch (basic residues) spans 297–310; the sequence is PVKKPKIRRKKSLS.

Belongs to the TAF8 family. Component of the TFIID basal transcription factor complex, composed of TATA-box-binding protein TBP, and a number of TBP-associated factors (TAFs), including TAF1, TAF2, TAF3, TAF4, TAF5, TAF6, TAF7, TAF8, TAF9, TAF10, TAF11, TAF12 and TAF13. Interacts with TBP, TAF1, TAF6, TAF10, TAF11 and TAF13. Component also of a small TAF complex (SMAT) containing TAF8, TAF10 and SUPT7L. Forms a heterodimer with TAF10. Interaction with TAF10 is mediated mainly via its histone fold domain while interaction with SUPT7L is via its C-terminal region.

Its subcellular location is the nucleus. The protein localises to the cytoplasm. Functionally, the TFIID basal transcription factor complex plays a major role in the initiation of RNA polymerase II (Pol II)-dependent transcription. TFIID recognizes and binds promoters with or without a TATA box via its subunit TBP, a TATA-box-binding protein, and promotes assembly of the pre-initiation complex (PIC). The TFIID complex consists of TBP and TBP-associated factors (TAFs), including TAF1, TAF2, TAF3, TAF4, TAF5, TAF6, TAF7, TAF8, TAF9, TAF10, TAF11, TAF12 and TAF13. The TFIID complex structure can be divided into 3 modules TFIID-A, TFIID-B, and TFIID-C. TAF8 is involved in forming the TFIID-B module, together with TAF5. Mediates both basal and activator-dependent transcription. Plays a role in the differentiation of preadipocyte fibroblasts to adipocytes, however, does not seem to play a role in differentiation of myoblasts. Required for the integration of TAF10 in the TAF complex. May be important for survival of cells of the inner cell mass which constitute the pluripotent cell population of the early embryo. The sequence is that of Transcription initiation factor TFIID subunit 8 (TAF8) from Homo sapiens (Human).